The following is a 347-amino-acid chain: Glutamyl-Q tRNA(Asp) synthetase (347 aa).

Residues 31–35 (RFAPS) and Glu-67 contribute to the L-glutamate site. The 'HIGH' region signature appears at 34 to 44 (PSPTSALHLGN). Cys-121, Cys-123, Tyr-143, and Cys-147 together coordinate Zn(2+). L-glutamate-binding residues include Tyr-203 and Arg-221. Positions 259–263 (RLSKS) match the 'KMSKS' region motif. Lys-262 lines the ATP pocket.

This sequence belongs to the class-I aminoacyl-tRNA synthetase family. GluQ subfamily. Requires Zn(2+) as cofactor.

Functionally, catalyzes the tRNA-independent activation of glutamate in presence of ATP and the subsequent transfer of glutamate onto a tRNA(Asp). Glutamate is transferred on the 2-amino-5-(4,5-dihydroxy-2-cyclopenten-1-yl) moiety of the queuosine in the wobble position of the QUC anticodon. The sequence is that of Glutamyl-Q tRNA(Asp) synthetase from Cutibacterium acnes (strain DSM 16379 / KPA171202) (Propionibacterium acnes).